The primary structure comprises 292 residues: Formamidopyrimidine-DNA glycosylase (292 aa).

Residue Pro-2 is the Schiff-base intermediate with DNA of the active site. Glu-3 functions as the Proton donor in the catalytic mechanism. Lys-58 acts as the Proton donor; for beta-elimination activity in catalysis. 3 residues coordinate DNA: His-103, Arg-122, and Lys-165. The FPG-type zinc-finger motif lies at 256 to 292; sequence RVYDRALHPCPTPGCKGEISRITQGGRSSFFCSMCQK. The Proton donor; for delta-elimination activity role is filled by Arg-282.

Belongs to the FPG family. Monomer. It depends on Zn(2+) as a cofactor.

The enzyme catalyses Hydrolysis of DNA containing ring-opened 7-methylguanine residues, releasing 2,6-diamino-4-hydroxy-5-(N-methyl)formamidopyrimidine.. It carries out the reaction 2'-deoxyribonucleotide-(2'-deoxyribose 5'-phosphate)-2'-deoxyribonucleotide-DNA = a 3'-end 2'-deoxyribonucleotide-(2,3-dehydro-2,3-deoxyribose 5'-phosphate)-DNA + a 5'-end 5'-phospho-2'-deoxyribonucleoside-DNA + H(+). In terms of biological role, involved in base excision repair of DNA damaged by oxidation or by mutagenic agents. Acts as a DNA glycosylase that recognizes and removes damaged bases. Has a preference for oxidized purines, such as 7,8-dihydro-8-oxoguanine (8-oxoG). Has AP (apurinic/apyrimidinic) lyase activity and introduces nicks in the DNA strand. Cleaves the DNA backbone by beta-delta elimination to generate a single-strand break at the site of the removed base with both 3'- and 5'-phosphates. In Methylocella silvestris (strain DSM 15510 / CIP 108128 / LMG 27833 / NCIMB 13906 / BL2), this protein is Formamidopyrimidine-DNA glycosylase.